The following is a 315-amino-acid chain: L-lactate dehydrogenase (315 aa).

The NAD(+) site is built by Val14, Asp35, and Tyr66. Substrate is bound by residues Gln83, Arg89, and 121–124 (NPVD). NAD(+)-binding positions include 119–121 (VAN) and Ser144. Residue 149-152 (DTAR) participates in substrate binding. The active-site Proton acceptor is the His176. At Tyr221 the chain carries Phosphotyrosine. Thr230 serves as a coordination point for substrate.

The protein belongs to the LDH/MDH superfamily. LDH family. Homotetramer.

The protein localises to the cytoplasm. It carries out the reaction (S)-lactate + NAD(+) = pyruvate + NADH + H(+). It participates in fermentation; pyruvate fermentation to lactate; (S)-lactate from pyruvate: step 1/1. Catalyzes the conversion of lactate to pyruvate. The chain is L-lactate dehydrogenase from Mesomycoplasma hyopneumoniae (strain 232) (Mycoplasma hyopneumoniae).